A 359-amino-acid polypeptide reads, in one-letter code: Type-1 angiotensin II receptor (359 aa).

The Extracellular segment spans residues 1 to 25 (MMLNSSTEDGIKRIQDDCPKAGRHN). A glycan (N-linked (GlcNAc...) asparagine) is linked at N4. Residues Q15 and D17 each coordinate angiotensin II. Intrachain disulfides connect C18–C274 and C101–C180. The helical transmembrane segment at 26–55 (YIFVMIPTLYSIIFVVGIFGNSLAVIVIYF) threads the bilayer. Residues 56 to 61 (YMKLKT) lie on the Cytoplasmic side of the membrane. Residues 62-89 (VASVFLLNLALADLCFLLTLPLWAVYTA) form a helical membrane-spanning segment. The Extracellular portion of the chain corresponds to 90–98 (MEYRWPFGN). Residues 99-125 (YLCKIASASVSFNLYASVFLLTCLSID) form a helical membrane-spanning segment. Residues 126–141 (RYLAIVHPMKSRLRRT) lie on the Cytoplasmic side of the membrane. A helical transmembrane segment spans residues 142 to 165 (MLVAKVTCIIIWLLAGLASLPAII). At 166–190 (HRNVFFIENTNITVCAFHYESQNST) the chain is on the extracellular side. Position 167 (R167) interacts with angiotensin II. An N-linked (GlcNAc...) asparagine glycan is attached at N176. Angiotensin II contacts are provided by F182, H183, and Y184. Residue N188 is glycosylated (N-linked (GlcNAc...) asparagine). A helical transmembrane segment spans residues 191–216 (LPIGLGLTKNILGFLFPFLIILTSYT). An angiotensin II-binding site is contributed by K199. At 217–239 (LIWKALKKAYEIQKNKPRNDDIF) the chain is on the cytoplasmic side. Residues 240–268 (KIIMAIVLFFFFSWVPHQIFTFLDVLIQL) form a helical membrane-spanning segment. The Extracellular segment spans residues 269–278 (GVIHDCRIAD). The helical transmembrane segment at 279–304 (IVDTAMPITICIAYFNNCLNPLFYGF) threads the bilayer. At 305-359 (LGKKFKKYFLQLLKYIPPKAKSHSNLSTKMSTLSYRPSDNVSSSSKKPVPCFEVE) the chain is on the cytoplasmic side. Residues 335–350 (STLSYRPSDNVSSSSK) show a composition bias toward polar residues. The segment at 335-359 (STLSYRPSDNVSSSSKKPVPCFEVE) is disordered. C355 is lipidated: S-palmitoyl cysteine.

The protein belongs to the G-protein coupled receptor 1 family. Interacts with MAS1. Interacts with ARRB1. Interacts with FLNA (via filamin repeat 21); increases PKA-mediated phosphorylation of FLNA. In terms of processing, C-terminal Ser or Thr residues may be phosphorylated.

It localises to the cell membrane. Functionally, receptor for angiotensin II, a vasoconstricting peptide, which acts as a key regulator of blood pressure and sodium retention by the kidney. The activated receptor in turn couples to G-alpha proteins G(q) (GNAQ, GNA11, GNA14 or GNA15) and thus activates phospholipase C and increases the cytosolic Ca(2+) concentrations, which in turn triggers cellular responses such as stimulation of protein kinase C. In Oryctolagus cuniculus (Rabbit), this protein is Type-1 angiotensin II receptor (AGTR1).